A 218-amino-acid polypeptide reads, in one-letter code: Very-long-chain (3R)-3-hydroxyacyl-CoA dehydratase (218 aa).

Residues 1–6 (MKTYLS) lie on the Cytoplasmic side of the membrane. A helical membrane pass occupies residues 7 to 29 (IYYLIQFCGHSWIFTNMTTRFLF). At 30–38 (FGQDAFADT) the chain is on the lumenal side. A helical transmembrane segment spans residues 39–61 (FYSIGLVMQGCQLLSILELAHIL). Topologically, residues 62-67 (LGVEQN) are cytoplasmic. A helical transmembrane segment spans residues 68–87 (GFLPMFLQVAERFIILFVVI). The Lumenal segment spans residues 88–96 (TSQEEVQSK). The chain crosses the membrane as a helical span at residues 97–116 (YIVCALFFIWNLWDVIRYPY). The Cytoplasmic segment spans residues 117-136 (DMLAAVDTDYSALTWLRHTW). A helical transmembrane segment spans residues 137-159 (WIVAYPLSVLAEAYTIYESLPYF). Residues tyrosine 141 and glutamate 148 contribute to the active site. The Lumenal segment spans residues 160 to 178 (ESLGTYSFKMALPVSLSFH). The chain crosses the membrane as a helical span at residues 179–201 (FPYILTLYLVLQPVGMLYICSCL). The Cytoplasmic portion of the chain corresponds to 202 to 218 (WSERKQYFQRKLKLKKN).

This sequence belongs to the very long-chain fatty acids dehydratase HACD family.

Its subcellular location is the endoplasmic reticulum membrane. The enzyme catalyses a very-long-chain (3R)-3-hydroxyacyl-CoA = a very-long-chain (2E)-enoyl-CoA + H2O. It carries out the reaction (3R)-hydroxyhexadecanoyl-CoA = (2E)-hexadecenoyl-CoA + H2O. It participates in lipid metabolism; fatty acid biosynthesis. Its function is as follows. Catalyzes the third of the four reactions of the long-chain fatty acids elongation cycle. This endoplasmic reticulum-bound enzymatic process, allows the addition of two carbons to the chain of long- and very long-chain fatty acids/VLCFAs per cycle. This enzyme catalyzes the dehydration of the 3-hydroxyacyl-CoA intermediate into trans-2,3-enoyl-CoA, within each cycle of fatty acid elongation. Thereby, it participates in the production of VLCFAs of different chain lengths that are involved in multiple biological processes as precursors of membrane lipids and lipid mediators. This is Very-long-chain (3R)-3-hydroxyacyl-CoA dehydratase from Xenopus laevis (African clawed frog).